The primary structure comprises 78 residues: Putative capsid protein ORF9 (78 aa).

A signal peptide spans methionine 1 to alanine 29. A helical membrane pass occupies residues valine 52–valine 72.

The protein belongs to the plectrovirus ORF9 family. As to quaternary structure, homomultimerizes.

Its subcellular location is the virion. The protein resides in the host membrane. Its function is as follows. May self assemble to form a helical capsid wrapping up the viral genomic DNA. The virion assembly and budding take place at the host inner membrane. The polypeptide is Putative capsid protein ORF9 (Spiroplasma virus SpV1-C74 (SpV1)).